The chain runs to 589 residues: Glucose starvation modulator protein 1 (589 aa).

Positions 20-48 (CVFCHQKHLQCSNERPCKNCVKRNIGHEC) form a DNA-binding region, zn(2)-C6 fungal-type. 3 disordered regions span residues 59-90 (LTGN…PSVA), 218-240 (NNSN…NPEP), and 340-362 (ANGQ…PGNG). A compositionally biased stretch (polar residues) spans 80-90 (TPITASSPSVA). Basic and acidic residues predominate over residues 347-357 (LLDHNKDDSRK). Positions 471 to 542 (SLLDYKKLVE…FKFFKNIAVN (72 aa)) constitute a PAS domain.

This sequence belongs to the ERT1/acuK family.

The protein localises to the nucleus. Its function is as follows. Transcription factor which regulates nonfermentable carbon utilization. The protein is Glucose starvation modulator protein 1 (GSM1) of Candida tropicalis (strain ATCC MYA-3404 / T1) (Yeast).